A 437-amino-acid chain; its full sequence is ATP-dependent protease ATPase subunit HslU (437 aa).

ATP is bound by residues V18, 60–65 (GCGKTE), D250, E315, and R387.

It belongs to the ClpX chaperone family. HslU subfamily. As to quaternary structure, a double ring-shaped homohexamer of HslV is capped on each side by a ring-shaped HslU homohexamer. The assembly of the HslU/HslV complex is dependent on binding of ATP.

Its subcellular location is the cytoplasm. Its function is as follows. ATPase subunit of a proteasome-like degradation complex; this subunit has chaperone activity. The binding of ATP and its subsequent hydrolysis by HslU are essential for unfolding of protein substrates subsequently hydrolyzed by HslV. HslU recognizes the N-terminal part of its protein substrates and unfolds these before they are guided to HslV for hydrolysis. In Methylorubrum populi (strain ATCC BAA-705 / NCIMB 13946 / BJ001) (Methylobacterium populi), this protein is ATP-dependent protease ATPase subunit HslU.